We begin with the raw amino-acid sequence, 352 residues long: Photosystem II protein D1 (352 aa).

The residue at position 2 (T2) is an N-acetylthreonine. Residue T2 is modified to Phosphothreonine. Transmembrane regions (helical) follow at residues 29-46, 118-133, and 142-156; these read YIGW…TATS, HFFL…EWEL, and WIAV…AATA. A chlorophyll a-binding site is contributed by H118. Y126 serves as a coordination point for pheophytin a. Residues D170 and E189 each contribute to the [CaMn4O5] cluster site. The chain crosses the membrane as a helical span at residues 197-218; sequence FHMLGVAGVFGGSLFSAMHGSL. H198 provides a ligand contact to chlorophyll a. A quinone-binding positions include H215 and 264-265; that span reads SF. H215 is a binding site for Fe cation. Residue H272 coordinates Fe cation. The chain crosses the membrane as a helical span at residues 274–288; sequence FLAAWPVVGIWFTAL. The [CaMn4O5] cluster site is built by H332, E333, D342, and A344. A propeptide spanning residues 345-352 is cleaved from the precursor; that stretch reads SVEAPSIA.

It belongs to the reaction center PufL/M/PsbA/D family. As to quaternary structure, PSII is composed of 1 copy each of membrane proteins PsbA, PsbB, PsbC, PsbD, PsbE, PsbF, PsbH, PsbI, PsbJ, PsbK, PsbL, PsbM, PsbT, PsbX, PsbY, PsbZ, Psb30/Ycf12, at least 3 peripheral proteins of the oxygen-evolving complex and a large number of cofactors. It forms dimeric complexes. The D1/D2 heterodimer binds P680, chlorophylls that are the primary electron donor of PSII, and subsequent electron acceptors. It shares a non-heme iron and each subunit binds pheophytin, quinone, additional chlorophylls, carotenoids and lipids. D1 provides most of the ligands for the Mn4-Ca-O5 cluster of the oxygen-evolving complex (OEC). There is also a Cl(-1) ion associated with D1 and D2, which is required for oxygen evolution. The PSII complex binds additional chlorophylls, carotenoids and specific lipids. is required as a cofactor. Post-translationally, tyr-161 forms a radical intermediate that is referred to as redox-active TyrZ, YZ or Y-Z. C-terminally processed by CTPA; processing is essential to allow assembly of the oxygen-evolving complex and thus photosynthetic growth.

The protein localises to the plastid. The protein resides in the chloroplast thylakoid membrane. It catalyses the reaction 2 a plastoquinone + 4 hnu + 2 H2O = 2 a plastoquinol + O2. Photosystem II (PSII) is a light-driven water:plastoquinone oxidoreductase that uses light energy to abstract electrons from H(2)O, generating O(2) and a proton gradient subsequently used for ATP formation. It consists of a core antenna complex that captures photons, and an electron transfer chain that converts photonic excitation into a charge separation. The D1/D2 (PsbA/PsbD) reaction center heterodimer binds P680, the primary electron donor of PSII as well as several subsequent electron acceptors. This chain is Photosystem II protein D1, found in Chlorella ellipsoidea.